A 163-amino-acid chain; its full sequence is Ribosome maturation factor RimP (163 aa).

Belongs to the RimP family.

It localises to the cytoplasm. In terms of biological role, required for maturation of 30S ribosomal subunits. This chain is Ribosome maturation factor RimP, found in Streptococcus mutans serotype c (strain ATCC 700610 / UA159).